The following is a 105-amino-acid chain: Iron-sulfur cluster assembly protein CyaY (105 aa).

Belongs to the frataxin family.

In terms of biological role, involved in iron-sulfur (Fe-S) cluster assembly. May act as a regulator of Fe-S biogenesis. The chain is Iron-sulfur cluster assembly protein CyaY from Paraburkholderia phytofirmans (strain DSM 17436 / LMG 22146 / PsJN) (Burkholderia phytofirmans).